The primary structure comprises 214 residues: Pyridoxine/pyridoxamine 5'-phosphate oxidase (214 aa).

Substrate contacts are provided by residues 9–12 (RKDY) and lysine 67. Residues 62-67 (RMVLLK), 77-78 (FT), arginine 83, lysine 84, and glutamine 106 each bind FMN. 3 residues coordinate substrate: tyrosine 124, arginine 128, and serine 132. Residues 141–142 (QS) and tryptophan 186 each bind FMN. Residue 192-194 (RLH) participates in substrate binding. Arginine 196 contributes to the FMN binding site.

It belongs to the pyridoxamine 5'-phosphate oxidase family. As to quaternary structure, homodimer. FMN is required as a cofactor.

It carries out the reaction pyridoxamine 5'-phosphate + O2 + H2O = pyridoxal 5'-phosphate + H2O2 + NH4(+). It catalyses the reaction pyridoxine 5'-phosphate + O2 = pyridoxal 5'-phosphate + H2O2. It functions in the pathway cofactor metabolism; pyridoxal 5'-phosphate salvage; pyridoxal 5'-phosphate from pyridoxamine 5'-phosphate: step 1/1. The protein operates within cofactor metabolism; pyridoxal 5'-phosphate salvage; pyridoxal 5'-phosphate from pyridoxine 5'-phosphate: step 1/1. Catalyzes the oxidation of either pyridoxine 5'-phosphate (PNP) or pyridoxamine 5'-phosphate (PMP) into pyridoxal 5'-phosphate (PLP). The chain is Pyridoxine/pyridoxamine 5'-phosphate oxidase from Nostoc punctiforme (strain ATCC 29133 / PCC 73102).